A 324-amino-acid chain; its full sequence is Acetyl-coenzyme A carboxylase carboxyl transferase subunit alpha (324 aa).

The 255-residue stretch at 44–298 (RFQNQLVKLQ…KKELTEQLDS (255 aa)) folds into the CoA carboxyltransferase C-terminal domain.

Belongs to the AccA family. Acetyl-CoA carboxylase is a heterohexamer composed of biotin carboxyl carrier protein (accB), biotin carboxylase (accC) and two subunits each of ACCase subunit alpha (accA) and ACCase subunit beta (accD).

Its subcellular location is the plastid. The protein resides in the chloroplast. It catalyses the reaction N(6)-carboxybiotinyl-L-lysyl-[protein] + acetyl-CoA = N(6)-biotinyl-L-lysyl-[protein] + malonyl-CoA. It participates in lipid metabolism; malonyl-CoA biosynthesis; malonyl-CoA from acetyl-CoA: step 1/1. Functionally, component of the acetyl coenzyme A carboxylase (ACC) complex. First, biotin carboxylase catalyzes the carboxylation of biotin on its carrier protein (BCCP) and then the CO(2) group is transferred by the carboxyltransferase to acetyl-CoA to form malonyl-CoA. The sequence is that of Acetyl-coenzyme A carboxylase carboxyl transferase subunit alpha from Pyropia yezoensis (Susabi-nori).